The chain runs to 352 residues: C-C chemokine receptor type 5 (352 aa).

Residues 1–30 (MDYQVSSPIYDIDYGASEPCRKTDVKQMGA) are Extracellular-facing. Residue tyrosine 3 is modified to Sulfotyrosine. Serine 6 and serine 7 each carry an O-linked (GalNAc...) serine glycan. Sulfotyrosine is present on residues tyrosine 10 and tyrosine 14. 2 disulfides stabilise this stretch: cysteine 20-cysteine 269 and cysteine 101-cysteine 178. A helical transmembrane segment spans residues 31-58 (HLLPPLYSMVFLFGFVGNMLVVLILVNC). Topologically, residues 59 to 68 (KRPKSMTDIY) are cytoplasmic. Residues 69–89 (LLNLAISDLLFLFTVPFWAHY) form a helical membrane-spanning segment. Residues 90–102 (AAGQWDFGNTMCQ) are Extracellular-facing. Residues 103–124 (FLTGLYFIGFFSGIFFIILLTI) form a helical membrane-spanning segment. At 125–141 (DRYLAIVHAVFALKART) the chain is on the cytoplasmic side. A helical membrane pass occupies residues 142–166 (VTFGVMTSVITWVVAVFASLPGIIF). The Extracellular segment spans residues 167–198 (TRSQKEGYHYTCSPHFPFGQYQFWKNFETLKM). A helical membrane pass occupies residues 199–218 (VILGLVLPLLVMVICYSGIL). The Cytoplasmic portion of the chain corresponds to 219–235 (KTLLRCRNEKKRHRAVR). The helical transmembrane segment at 236-260 (LIFTIMIVYFLFWAPYNIVLLLNTY) threads the bilayer. The Extracellular portion of the chain corresponds to 261-277 (QEFFGLNNCSSSNRLDQ). The helical transmembrane segment at 278-301 (AMQVTETLGMTHCCVNPIIYAFVG) threads the bilayer. The Cytoplasmic segment spans residues 302–352 (EKFRNYLLVFFQKHIAKCFCECCSIFQKEAPERANSVYTRSTGEQEISVGL). S-palmitoyl cysteine attachment occurs at residues cysteine 321, cysteine 323, and cysteine 324. A phosphoserine; by BARK1 mark is found at serine 337, serine 342, and serine 349.

The protein belongs to the G-protein coupled receptor 1 family. Interacts with PRAF2. Efficient ligand binding to CCL3/MIP-1alpha and CCL4/MIP-1beta requires sulfation, O-glycosylation and sialic acid modifications. Glycosylation on Ser-6 is required for efficient binding of CCL4. Interacts with GRK2. Interacts with ARRB1 and ARRB2. Interacts with CNIH4. Interacts with S100A4; this interaction stimulates T-lymphocyte chemotaxis. Post-translationally, sulfated on at least 2 of the N-terminal tyrosines. Sulfation is required for efficient binding of the chemokines, CCL3 and CCL4. Palmitoylation in the C-terminal is important for cell surface expression. In terms of processing, phosphorylation on serine residues in the C-terminal is stimulated by binding CC chemokines especially by APO-RANTES. Post-translationally, O-glycosylated, but not N-glycosylated. Ser-6 appears to be the major site even if Ser-7 may be also O-glycosylated. Also sialylated glycans present which contribute to chemokine binding. Ser-17 may also be glycosylated and, if so, with small moieties such as a T-antigen.

The protein resides in the cell membrane. In terms of biological role, receptor for a number of inflammatory CC-chemokines including CCL3/MIP-1-alpha, CCL4/MIP-1-beta and RANTES and subsequently transduces a signal by increasing the intracellular calcium ion level. May play a role in the control of granulocytic lineage proliferation or differentiation. Participates in T-lymphocyte migration to the infection site by acting as a chemotactic receptor. This chain is C-C chemokine receptor type 5 (CCR5), found in Ateles geoffroyi (Black-handed spider monkey).